A 1042-amino-acid chain; its full sequence is Disintegrin and metalloproteinase domain-containing protein unc-71 (1042 aa).

Residues 1–23 (MICASKITMLGLLVMCTLGGVLG) form the signal peptide. Topologically, residues 24 to 746 (KVDIRQTTAN…NIGTTLETAT (723 aa)) are extracellular. Residues asparagine 103 and asparagine 155 are each glycosylated (N-linked (GlcNAc...) asparagine). Residues 227–431 (KYVEVALIAD…GNIQCLLNKP (205 aa)) enclose the Peptidase M12B domain. 4 disulfide bridges follow: cysteine 338–cysteine 426, cysteine 378–cysteine 410, cysteine 380–cysteine 386, and cysteine 496–cysteine 516. Residues 437 to 524 (LRECGNGVVD…DCPPDGHLID (88 aa)) form the Disintegrin domain. N-linked (GlcNAc...) asparagine glycosylation occurs at asparagine 538. Residues 662–699 (SATACPTNNLALLCSGHGHCTTTARCVCFNGWSGVACD) form the EGF-like domain. Disulfide bonds link cysteine 666/cysteine 681, cysteine 675/cysteine 687, and cysteine 689/cysteine 698. Asparagine 703 is a glycosylation site (N-linked (GlcNAc...) asparagine). A helical membrane pass occupies residues 747 to 767 (LFAILLGFGVFLLLCLVCLML). Residues 768–1042 (CYRRRSVVEI…KLEMTNSMHN (275 aa)) lie on the Cytoplasmic side of the membrane. Disordered stretches follow at residues 779–809 (KPSD…RKRK), 825–850 (DERD…RRNG), and 980–1028 (HDVG…PSLF). A compositionally biased stretch (basic and acidic residues) spans 825–836 (DERDSTSLRSRD). Polar residues predominate over residues 1002–1027 (DSPTLVNGASSSSTSNNYNFRQSPSL).

It localises to the cell membrane. Involved in the migration of sex myoblasts (progenitors of egg-laying muscles), Q neuroblasts and BDU interneurons during development. Involved in axon branching and guidance of neurons including GABAergic type D motor neurons. Promotes sex myoblast migration and positioning independently of gonad attraction cues. May act downstream of mig-13 in order to promote the guidance, migration and positioning of Q neuroblasts and their descendants along the anteroposterior body axis. Required for coordinated movements. The sequence is that of Disintegrin and metalloproteinase domain-containing protein unc-71 from Caenorhabditis elegans.